We begin with the raw amino-acid sequence, 544 residues long: Fructose dehydrogenase large subunit (544 aa).

Residue 14–30 coordinates FAD; it reads GAGICGSLLAHKLVRNG. The active-site Proton acceptor is histidine 478.

The protein belongs to the GMC oxidoreductase family. Heterotrimer composed of FdhL, FdhS and FdhC. Requires FAD as cofactor.

The protein localises to the cell membrane. It catalyses the reaction keto-D-fructose + a ubiquinone = 5-dehydro-D-fructose + a ubiquinol. Catalytic subunit of fructose dehydrogenase, an enzyme that catalyzes the oxidation of D-fructose to produce 5-keto-D-fructose. The protein is Fructose dehydrogenase large subunit (fdhL) of Gluconobacter japonicus.